A 386-amino-acid polypeptide reads, in one-letter code: Acetate kinase (386 aa).

Asn9 provides a ligand contact to Mg(2+). ATP is bound at residue Lys16. Arg74 contributes to the substrate binding site. The active-site Proton donor/acceptor is Asp131. ATP is bound by residues 191 to 195 (HLGNG), 265 to 267 (DFR), and 313 to 317 (GVGEN). A Mg(2+)-binding site is contributed by Glu367.

The protein belongs to the acetokinase family. As to quaternary structure, homodimer. The cofactor is Mg(2+). Requires Mn(2+) as cofactor.

It is found in the cytoplasm. The enzyme catalyses acetate + ATP = acetyl phosphate + ADP. Its pathway is metabolic intermediate biosynthesis; acetyl-CoA biosynthesis; acetyl-CoA from acetate: step 1/2. Functionally, catalyzes the formation of acetyl phosphate from acetate and ATP. Can also catalyze the reverse reaction. This chain is Acetate kinase, found in Mycolicibacterium gilvum (strain PYR-GCK) (Mycobacterium gilvum (strain PYR-GCK)).